The sequence spans 310 residues: Methionyl-tRNA formyltransferase (310 aa).

106 to 109 (SLLP) contributes to the (6S)-5,6,7,8-tetrahydrofolate binding site.

The protein belongs to the Fmt family.

It carries out the reaction L-methionyl-tRNA(fMet) + (6R)-10-formyltetrahydrofolate = N-formyl-L-methionyl-tRNA(fMet) + (6S)-5,6,7,8-tetrahydrofolate + H(+). Functionally, attaches a formyl group to the free amino group of methionyl-tRNA(fMet). The formyl group appears to play a dual role in the initiator identity of N-formylmethionyl-tRNA by promoting its recognition by IF2 and preventing the misappropriation of this tRNA by the elongation apparatus. The sequence is that of Methionyl-tRNA formyltransferase from Fervidobacterium nodosum (strain ATCC 35602 / DSM 5306 / Rt17-B1).